Here is a 352-residue protein sequence, read N- to C-terminus: Chorismate synthase (352 aa).

Arg-48 is a binding site for NADP(+). Residues Arg-125–Ser-127, Asn-237–Ala-238, Gly-278, Lys-293–Ser-297, and Arg-319 each bind FMN.

Belongs to the chorismate synthase family. Homotetramer. FMNH2 serves as cofactor.

It catalyses the reaction 5-O-(1-carboxyvinyl)-3-phosphoshikimate = chorismate + phosphate. It participates in metabolic intermediate biosynthesis; chorismate biosynthesis; chorismate from D-erythrose 4-phosphate and phosphoenolpyruvate: step 7/7. In terms of biological role, catalyzes the anti-1,4-elimination of the C-3 phosphate and the C-6 proR hydrogen from 5-enolpyruvylshikimate-3-phosphate (EPSP) to yield chorismate, which is the branch point compound that serves as the starting substrate for the three terminal pathways of aromatic amino acid biosynthesis. This reaction introduces a second double bond into the aromatic ring system. This chain is Chorismate synthase, found in Francisella tularensis subsp. tularensis (strain FSC 198).